Reading from the N-terminus, the 269-residue chain is F-box protein At5g52880 (269 aa).

One can recognise an F-box domain in the interval 109–155 (DIDIPSLPQDILIHIFSFLEISSLVSSAQVSRSWNQATHENSLWQSQ).

In Arabidopsis thaliana (Mouse-ear cress), this protein is F-box protein At5g52880.